The chain runs to 237 residues: Protein GrpE (237 aa).

Disordered stretches follow at residues 1–52 (MSGD…RLQQ) and 200–237 (KVSM…EPGV). Over residues 27 to 40 (ASMNSDEGQPSAQS) the composition is skewed to polar residues. Residues 204–218 (GPGPQSGASPSSAQS) are compositionally biased toward low complexity.

Belongs to the GrpE family. In terms of assembly, homodimer.

The protein localises to the cytoplasm. In terms of biological role, participates actively in the response to hyperosmotic and heat shock by preventing the aggregation of stress-denatured proteins, in association with DnaK and GrpE. It is the nucleotide exchange factor for DnaK and may function as a thermosensor. Unfolded proteins bind initially to DnaJ; upon interaction with the DnaJ-bound protein, DnaK hydrolyzes its bound ATP, resulting in the formation of a stable complex. GrpE releases ADP from DnaK; ATP binding to DnaK triggers the release of the substrate protein, thus completing the reaction cycle. Several rounds of ATP-dependent interactions between DnaJ, DnaK and GrpE are required for fully efficient folding. The chain is Protein GrpE from Prochlorococcus marinus (strain MIT 9303).